A 308-amino-acid chain; its full sequence is N-acetyl-gamma-glutamyl-phosphate reductase (308 aa).

Cys-116 is a catalytic residue.

The protein belongs to the NAGSA dehydrogenase family. Type 2 subfamily.

Its subcellular location is the cytoplasm. It catalyses the reaction N-acetyl-L-glutamate 5-semialdehyde + phosphate + NADP(+) = N-acetyl-L-glutamyl 5-phosphate + NADPH + H(+). It participates in amino-acid biosynthesis; L-arginine biosynthesis; N(2)-acetyl-L-ornithine from L-glutamate: step 3/4. Catalyzes the NADPH-dependent reduction of N-acetyl-5-glutamyl phosphate to yield N-acetyl-L-glutamate 5-semialdehyde. The sequence is that of N-acetyl-gamma-glutamyl-phosphate reductase from Mesorhizobium japonicum (strain LMG 29417 / CECT 9101 / MAFF 303099) (Mesorhizobium loti (strain MAFF 303099)).